We begin with the raw amino-acid sequence, 1179 residues long: Calcium-activated potassium channel subunit alpha-1 (1179 aa).

A compositionally biased stretch (gly residues) spans 1–24; it reads MANGGGGGGGSSGGGGGGGGGGSG. Residues 1–62 are disordered; that stretch reads MANGGGGGGG…SSSSSSSSSV (62 aa). Topologically, residues 1–87 are extracellular; the sequence is MANGGGGGGG…VPCDSRGQRM (87 aa). Residues 41–61 are compositionally biased toward low complexity; that stretch reads SSSSSSSSSSSSSSSSSSSSS. A helical transmembrane segment spans residues 88–108; that stretch reads WWAFLASSMVTFFGGLFIILL. Over 109–179 the chain is Cytoplasmic; that stretch reads WRTLKYLWTV…MISAQTLTGR (71 aa). S-palmitoyl cysteine attachment occurs at residues Cys-119, Cys-120, and Cys-122. A helical membrane pass occupies residues 180 to 200; sequence VLVVLVFALSIGALVIYFIDS. Residues 201–215 lie on the Extracellular side of the membrane; it reads SNPIESCQNFYKDFT. A helical membrane pass occupies residues 216 to 236; the sequence is LQIDMAFNVFFLLYFGLRFIA. Over 237–240 the chain is Cytoplasmic; sequence ANDK. The helical transmembrane segment at 241–261 threads the bilayer; that stretch reads LWFWLEVNSVVDFFTVPPVFV. Over 262–265 the chain is Extracellular; that stretch reads SVYL. Residues 266–286 form a helical; Voltage-sensor membrane-spanning segment; sequence NRSWLGLRFLRALRLIQFSEI. At 287–301 the chain is on the cytoplasmic side; it reads LQFLNILKTSNSIKL. Residues 302–322 form a helical membrane-spanning segment; the sequence is VNLLSIFISTWLTAAGFIHLV. The Extracellular segment spans residues 323–336; the sequence is ENSGDPWENFQNNQ. Residues 337–359 constitute an intramembrane region (pore-forming); the sequence is ALTYWECVYLLMVTMSTVGYGDV. Positions 353 to 356 match the Selectivity for potassium motif; the sequence is TVGY. The Extracellular segment spans residues 360–368; that stretch reads YAKTTLGRL. Residues 369 to 389 traverse the membrane as a helical segment; it reads FMVFFILGGLAMFASYVPEII. The Cytoplasmic segment spans residues 390–1179; it reads ELIGNRKKYG…KQKYVQEERL (790 aa). The RCK N-terminal 1 domain occupies 408-550; that stretch reads RKHIVVCGHI…WNWKEGDDAI (143 aa). Mg(2+) contacts are provided by Glu-440, Gln-463, and Glu-465. The segment at 557–577 is segment S7; the sequence is LGFIAQSCLAQGLSTMLANLF. Residues 614 to 634 form a segment S8 region; it reads LSFPTVCELCFVKLKLLMIAI. Residues 678 to 682 form a heme-binding motif region; that stretch reads CKACH. Positions 702–730 are disordered; that stretch reads EQPSTLSPKKKQRNGGMRNSPNSSPKLMR. Thr-706 carries the phosphothreonine modification. Phosphoserine is present on residues Ser-708, Ser-721, and Ser-725. Residues 780–800 are segment S9; that stretch reads VLSGHVVVCIFGDVSSALIGL. One can recognise an RCK N-terminal 2 domain in the interval 782–926; the sequence is SGHVVVCIFG…MDRSSPDNSP (145 aa). Thr-913 bears the Phosphothreonine mark. Residues Ser-921 and Ser-925 each carry the phosphoserine modification. Residues 946 to 968 carry the Calcium bowl motif; it reads TELVNDTNVQFLDQDDDDDPDTE. Gln-955, Asp-958, Asp-961, and Asp-963 together coordinate Ca(2+). A segment S10 region spans residues 975–995; that stretch reads FACGTAFAVSVLDSLMSATYF. Residues 1129-1154 show a composition bias toward low complexity; that stretch reads RASLSHSSHSSQSSSKKSSSVHSIPS. The interval 1129–1179 is disordered; that stretch reads RASLSHSSHSSQSSSKKSSSVHSIPSTANRQNRPKSRESRDKQKYVQEERL. A compositionally biased stretch (basic and acidic residues) spans 1163 to 1179; it reads KSRESRDKQKYVQEERL. Phosphoserine occurs at positions 1164 and 1167.

It belongs to the potassium channel family. Calcium-activated (TC 1.A.1.3) subfamily. KCa1.1/KCNMA1 sub-subfamily. In terms of assembly, homotetramer; which constitutes the calcium-activated potassium channel. Interacts with beta subunits KCNMB1, KCNMB2, KCNMB3 and KCNMB4. Interacts with gamma subunits LRRC26, LRRC38, LRRC52 and LRRC55. Beta and gamma subunits are accessory, and modulate its activity. Interacts with RAB11B. In terms of processing, phosphorylated. Phosphorylation by kinases such as PKA and/or PKG. In smooth muscles, phosphorylation affects its activity. Palmitoylation by ZDHHC22 and ZDHHC23 within the intracellular linker between the S0 and S1 transmembrane domains regulates localization to the plasma membrane. Depalmitoylated by LYPLA1 and LYPLAL1, leading to retard exit from the trans-Golgi network.

It is found in the cell membrane. The protein resides in the endoplasmic reticulum membrane. The enzyme catalyses K(+)(in) = K(+)(out). Its activity is regulated as follows. Ethanol and carbon monoxide-bound heme increase channel activation. Heme inhibits channel activation. Potassium channel activated by both membrane depolarization or increase in cytosolic Ca(2+) that mediates export of K(+). It is also activated by the concentration of cytosolic Mg(2+). Its activation dampens the excitatory events that elevate the cytosolic Ca(2+) concentration and/or depolarize the cell membrane. It therefore contributes to repolarization of the membrane potential. Plays a key role in controlling excitability in a number of systems, such as regulation of the contraction of smooth muscle, the tuning of hair cells in the cochlea, regulation of transmitter release, and innate immunity. In smooth muscles, its activation by high level of Ca(2+), caused by ryanodine receptors in the sarcoplasmic reticulum, regulates the membrane potential. In cochlea cells, its number and kinetic properties partly determine the characteristic frequency of each hair cell and thereby helps to establish a tonotopic map. Kinetics of KCNMA1 channels are determined by alternative splicing, phosphorylation status and its combination with modulating beta subunits. Highly sensitive to both iberiotoxin (IbTx) and charybdotoxin (CTX). Its function is as follows. Potassium channel activated by both membrane depolarization or increase in cytosolic Ca(2+) that mediates export of K(+). In Oryctolagus cuniculus (Rabbit), this protein is Calcium-activated potassium channel subunit alpha-1 (KCNMA1).